Consider the following 207-residue polypeptide: dITP/XTP pyrophosphatase (207 aa).

7-12 (SNNAKK) contributes to the substrate binding site. Asp72 acts as the Proton acceptor in catalysis. Position 72 (Asp72) interacts with Mg(2+). Residues Ser73, 155 to 158 (FGYD), Lys184, and 189 to 190 (HR) each bind substrate.

This sequence belongs to the HAM1 NTPase family. Homodimer. The cofactor is Mg(2+).

The enzyme catalyses XTP + H2O = XMP + diphosphate + H(+). It carries out the reaction dITP + H2O = dIMP + diphosphate + H(+). It catalyses the reaction ITP + H2O = IMP + diphosphate + H(+). Pyrophosphatase that catalyzes the hydrolysis of nucleoside triphosphates to their monophosphate derivatives, with a high preference for the non-canonical purine nucleotides XTP (xanthosine triphosphate), dITP (deoxyinosine triphosphate) and ITP. Seems to function as a house-cleaning enzyme that removes non-canonical purine nucleotides from the nucleotide pool, thus preventing their incorporation into DNA/RNA and avoiding chromosomal lesions. This Corynebacterium efficiens (strain DSM 44549 / YS-314 / AJ 12310 / JCM 11189 / NBRC 100395) protein is dITP/XTP pyrophosphatase.